A 572-amino-acid chain; its full sequence is Squalene monooxygenase (572 aa).

Topologically, residues 1–19 (MWTFLGIATFTYFYKKCGD) are cytoplasmic. Positions 1 to 98 (MWTFLGIATF…EQLESKKCRK (98 aa)) are interaction with MARCHF6. An intramembrane segment occupies 20-40 (VTLANKELLLCVLVFLSLGLV). Residues 41 to 572 (LSYRCRHRHG…IYSEMKYLVH (532 aa)) lie on the Cytoplasmic side of the membrane. The segment at 61 to 72 (QFAAFSDILSAL) is required for degradation in response to high membrane cholesterol levels. A sufficient for enzyme activity region spans residues 116–572 (TSFVTDPEVI…IYSEMKYLVH (457 aa)). FAD contacts are provided by residues 131-132 (VL), 151-152 (ER), R159, R232, V248, D406, and M419. The interval 514–572 (PLVLIRHFFSVAIYATYFCFKSEPWATKPRALFSSGAVLYKACSILFPLIYSEMKYLVH) is hydrophobic; mediates interaction with membranes.

It belongs to the squalene monooxygenase family. In terms of assembly, interacts (via N-terminal domain) with MARCHF6. Interacts with SMIM22; this interaction modulates lipid droplet formation. It depends on FAD as a cofactor. In terms of processing, ubiquitinated by MARCHF6 in response to high cholesterol levels in intracellular membranes, leading to proteasomal degradation. Detected in liver.

It is found in the microsome membrane. Its subcellular location is the endoplasmic reticulum membrane. The enzyme catalyses squalene + reduced [NADPH--hemoprotein reductase] + O2 = (S)-2,3-epoxysqualene + oxidized [NADPH--hemoprotein reductase] + H2O + H(+). It participates in terpene metabolism; lanosterol biosynthesis; lanosterol from farnesyl diphosphate: step 2/3. In terms of biological role, catalyzes the stereospecific oxidation of squalene to (S)-2,3-epoxysqualene, and is considered to be a rate-limiting enzyme in steroid biosynthesis. This is Squalene monooxygenase (Sqle) from Mus musculus (Mouse).